Consider the following 282-residue polypeptide: MKVILAKQAGFCFGVKRATQMAFEAADKGGKTYTLGPIIHSPQVVQKLEEMGVKALKDISGMDDGTIIIRSHGVASGELEEAVRKELEIVDATCPFVKKAQEHVESLSQAGYDVVVVGDADHPEVQGIVSYASGKVYVVGSGDEAAKLPKMAKIGVVAQTTQSFENLKNVVDACLTKGGEIRVFHTICDATAVRQEEAKELASQVDCMIVIGGYNSANTKRLAEVCTELQPRTYHIEMAQQLNPRWFEGVGKVGVTAGASTPKWLIDEVLEQIEKINKDKNH.

Cys12 is a [4Fe-4S] cluster binding site. His40 and His72 together coordinate (2E)-4-hydroxy-3-methylbut-2-enyl diphosphate. Residues His40 and His72 each contribute to the dimethylallyl diphosphate site. Isopentenyl diphosphate is bound by residues His40 and His72. Cys94 lines the [4Fe-4S] cluster pocket. Residue His122 participates in (2E)-4-hydroxy-3-methylbut-2-enyl diphosphate binding. His122 is a dimethylallyl diphosphate binding site. An isopentenyl diphosphate-binding site is contributed by His122. Glu124 serves as the catalytic Proton donor. Residue Thr160 participates in (2E)-4-hydroxy-3-methylbut-2-enyl diphosphate binding. Cys188 provides a ligand contact to [4Fe-4S] cluster. The (2E)-4-hydroxy-3-methylbut-2-enyl diphosphate site is built by Ser216, Asn218, and Ser260. Dimethylallyl diphosphate-binding residues include Ser216, Asn218, and Ser260. Ser216, Asn218, and Ser260 together coordinate isopentenyl diphosphate.

It belongs to the IspH family. Requires [4Fe-4S] cluster as cofactor.

The catalysed reaction is isopentenyl diphosphate + 2 oxidized [2Fe-2S]-[ferredoxin] + H2O = (2E)-4-hydroxy-3-methylbut-2-enyl diphosphate + 2 reduced [2Fe-2S]-[ferredoxin] + 2 H(+). The enzyme catalyses dimethylallyl diphosphate + 2 oxidized [2Fe-2S]-[ferredoxin] + H2O = (2E)-4-hydroxy-3-methylbut-2-enyl diphosphate + 2 reduced [2Fe-2S]-[ferredoxin] + 2 H(+). Its pathway is isoprenoid biosynthesis; dimethylallyl diphosphate biosynthesis; dimethylallyl diphosphate from (2E)-4-hydroxy-3-methylbutenyl diphosphate: step 1/1. It participates in isoprenoid biosynthesis; isopentenyl diphosphate biosynthesis via DXP pathway; isopentenyl diphosphate from 1-deoxy-D-xylulose 5-phosphate: step 6/6. Its function is as follows. Catalyzes the conversion of 1-hydroxy-2-methyl-2-(E)-butenyl 4-diphosphate (HMBPP) into a mixture of isopentenyl diphosphate (IPP) and dimethylallyl diphosphate (DMAPP). Acts in the terminal step of the DOXP/MEP pathway for isoprenoid precursor biosynthesis. This Geotalea uraniireducens (strain Rf4) (Geobacter uraniireducens) protein is 4-hydroxy-3-methylbut-2-enyl diphosphate reductase.